The chain runs to 345 residues: Phosphoribosylformylglycinamidine cyclo-ligase (345 aa).

It belongs to the AIR synthase family.

It localises to the cytoplasm. The enzyme catalyses 2-formamido-N(1)-(5-O-phospho-beta-D-ribosyl)acetamidine + ATP = 5-amino-1-(5-phospho-beta-D-ribosyl)imidazole + ADP + phosphate + H(+). The protein operates within purine metabolism; IMP biosynthesis via de novo pathway; 5-amino-1-(5-phospho-D-ribosyl)imidazole from N(2)-formyl-N(1)-(5-phospho-D-ribosyl)glycinamide: step 2/2. This is Phosphoribosylformylglycinamidine cyclo-ligase from Methylococcus capsulatus (strain ATCC 33009 / NCIMB 11132 / Bath).